A 238-amino-acid chain; its full sequence is Envelope glycoprotein G (238 aa).

An N-terminal signal peptide occupies residues 1–24; sequence MSQGAMRAVVPIIPFLLVLVGVSG. Residues 25–189 are Virion surface-facing; sequence VPTNVSSTTQ…SFLTASPALD (165 aa). N-linked (GlcNAc...) asparagine; by host glycans are attached at residues N28 and N49. 2 stretches are compositionally biased toward polar residues: residues 28 to 42 and 49 to 68; these read NVSS…TTGR and NMTQ…TTPD. Positions 28-171 are disordered; sequence NVSSTTQPQL…LTSKGRPLVP (144 aa). Residues 78–88 are compositionally biased toward acidic residues; the sequence is LEEEEEEEGAG. Basic and acidic residues predominate over residues 89–100; sequence DGEHLEGGDGTR. A helical transmembrane segment spans residues 190–210; it reads TLFVVSTVIHTLSFLCIGAMA. Residues 211 to 238 lie on the Intravirion side of the membrane; sequence THLCGGWSRRGRRTHPSVRYVCLPSERG.

Belongs to the alphaherpesvirinae glycoprotein G family.

The protein resides in the virion membrane. Functionally, chemokine-binding protein that inhibits neutrophils' chemotaxis. In Human herpesvirus 1 (strain 17) (HHV-1), this protein is Envelope glycoprotein G (gG).